We begin with the raw amino-acid sequence, 138 residues long: Large ribosomal subunit protein uL16 (138 aa).

This sequence belongs to the universal ribosomal protein uL16 family. Part of the 50S ribosomal subunit.

Binds 23S rRNA and is also seen to make contacts with the A and possibly P site tRNAs. In Neisseria gonorrhoeae (strain ATCC 700825 / FA 1090), this protein is Large ribosomal subunit protein uL16.